We begin with the raw amino-acid sequence, 579 residues long: DELLA protein GAIP (579 aa).

The interval 1-25 (MKREHHYLHPRPEPPSVATGSNRES) is disordered. The DELLA motif signature appears at 46–50 (DELLA). A GRAS domain is found at 202–570 (VDSQENGIQL…RPLIATSAWK (369 aa)). The interval 209-263 (IQLVHALMVCAEAVQQNNLNLAEALVKRIDYLAVSQAGAMRKVATFFAEALARRI) is leucine repeat I (LRI). Positions 281–346 (QMHFYESCPY…SGPPTFRLTG (66 aa)) are VHIID. Residues 312 to 316 (VHVID) carry the VHIID motif. Residues 360-392 (DVGWKLVKFAETLHVEFEYRGFVANSLADLDAS) are leucine repeat II (LRII). Positions 404 to 491 (VVVNSVFELH…EMYLGKQICN (88 aa)) are PFYRE. The short motif at 412–416 (LHQLL) is the LXXLL motif element. Residues 494 to 570 (ACEGADRVER…RPLIATSAWK (77 aa)) are SAW.

The protein belongs to the GRAS family. DELLA subfamily. In terms of processing, phosphorylated. Post-translationally, ubiquitinated. Upon GA application it is ubiquitinated, leading to its subsequent degradation.

Its subcellular location is the nucleus. Its function is as follows. Probable transcriptional regulator that acts as a repressor of the gibberellin (GA) signaling pathway. Probably acts by participating in large multiprotein complexes that represses transcription of GA-inducible genes. Upon GA application, it is degraded by the proteasome, allowing the GA signaling pathway. The chain is DELLA protein GAIP (GAIP) from Cucurbita maxima (Pumpkin).